Consider the following 334-residue polypeptide: Putative B3 domain-containing protein At5g66980 (334 aa).

DNA-binding regions (TF-B3) lie at residues 8 to 105 and 218 to 317; these read LQFF…FAND and HPHF…VSGR.

It is found in the nucleus. The polypeptide is Putative B3 domain-containing protein At5g66980 (Arabidopsis thaliana (Mouse-ear cress)).